Here is a 336-residue protein sequence, read N- to C-terminus: Dihydroorotate dehydrogenase (quinone) (336 aa).

FMN-binding positions include 62-66 (AGLDK) and Thr86. Lys66 contributes to the substrate binding site. Position 111–115 (111–115 (NRMGF)) interacts with substrate. The FMN site is built by Asn139 and Asn172. Asn172 lines the substrate pocket. The active-site Nucleophile is the Ser175. Residue Asn177 coordinates substrate. 2 residues coordinate FMN: Lys217 and Thr245. A substrate-binding site is contributed by 246–247 (NT). FMN is bound by residues Gly268, Gly297, and 318–319 (YS).

This sequence belongs to the dihydroorotate dehydrogenase family. Type 2 subfamily. As to quaternary structure, monomer. FMN serves as cofactor.

The protein resides in the cell membrane. It carries out the reaction (S)-dihydroorotate + a quinone = orotate + a quinol. It functions in the pathway pyrimidine metabolism; UMP biosynthesis via de novo pathway; orotate from (S)-dihydroorotate (quinone route): step 1/1. Functionally, catalyzes the conversion of dihydroorotate to orotate with quinone as electron acceptor. In Klebsiella pneumoniae subsp. pneumoniae (strain ATCC 700721 / MGH 78578), this protein is Dihydroorotate dehydrogenase (quinone).